Reading from the N-terminus, the 237-residue chain is Putative exosome complex component rrp40 (237 aa).

One can recognise an S1 motif domain in the interval 67–137 (EDMVIGTIIE…EPEVVCLSQK (71 aa)).

The protein belongs to the RRP40 family. Component of the RNA exosome complex.

Its subcellular location is the cytoplasm. It localises to the nucleus. The protein resides in the nucleolus. Functionally, non-catalytic component of the RNA exosome complex which has 3'-&gt;5' exoribonuclease activity and participates in a multitude of cellular RNA processing and degradation events. This is Putative exosome complex component rrp40 (exosc3) from Dictyostelium discoideum (Social amoeba).